The chain runs to 921 residues: cGMP-dependent 3',5'-cyclic phosphodiesterase (921 aa).

An N-acetylmethionine modification is found at M1. Disordered stretches follow at residues 1 to 21 and 177 to 198; these read MRRQ…PPGS and ESSV…DQKG. Residues 177-188 are compositionally biased toward polar residues; the sequence is ESSVAPEATQNP. GAF domains are found at residues 220–357 and 389–528; these read DASS…STVL and DVSV…GISI. 5 residues coordinate 3',5'-cyclic GMP: S411, D426, I445, Y468, and T479. The 325-residue stretch at 558 to 882 folds into the PDEase domain; sequence SDDEYTKLLH…EHWTKVSHKF (325 aa). Catalysis depends on H636, which acts as the Proton donor. The Zn(2+) site is built by H640, H676, D677, and D788. Position 677 (D677) interacts with Mg(2+).

This sequence belongs to the cyclic nucleotide phosphodiesterase family. PDE2 subfamily. Homodimer. The cofactor is Zn(2+). Mg(2+) is required as a cofactor.

The protein resides in the cell membrane. Its subcellular location is the cytoplasm. It localises to the mitochondrion. The protein localises to the mitochondrion inner membrane. It is found in the mitochondrion outer membrane. It catalyses the reaction a nucleoside 3',5'-cyclic phosphate + H2O = a nucleoside 5'-phosphate + H(+). The catalysed reaction is 3',5'-cyclic GMP + H2O = GMP + H(+). It carries out the reaction 3',5'-cyclic AMP + H2O = AMP + H(+). The 3',5'-cyclic-AMP phosphodiesterase activity is stimulated by 3',5'-cyclic GMP. CGMP-activated cyclic nucleotide phosphodiesterase with a dual-specificity for the second messengers cAMP and cGMP, which are key regulators of many important physiological processes. Has a higher efficiency with cGMP compared to cAMP. Plays a role in cell growth and migration. Its function is as follows. Regulates mitochondrial cAMP levels and respiration. Involved in the regulation of mitochondria morphology/dynamics and apoptotic cell death via local modulation of cAMP/PKA signaling in the mitochondrion, including the monitoring of local cAMP levels at the outer mitochondrial membrane and of PKA-dependent phosphorylation of DNM1L. In Bos taurus (Bovine), this protein is cGMP-dependent 3',5'-cyclic phosphodiesterase.